A 233-amino-acid chain; its full sequence is Ribosomal RNA-processing protein 14-C (233 aa).

Residues 32–65 (DRALLLQRRKEKAKARAEAKKLAKKESKAKQESK) adopt a coiled-coil conformation. Over residues 47–64 (RAEAKKLAKKESKAKQES) the composition is skewed to basic and acidic residues. 3 disordered regions span residues 47 to 87 (RAEA…DNHK), 130 to 149 (KRRI…ESDK), and 164 to 233 (DNEQ…SKKK). Ser-75 carries the phosphoserine modification. The stretch at 122–223 (ALKHLEAKKR…ESKKSKKGKA (102 aa)) forms a coiled coil. Composition is skewed to basic and acidic residues over residues 133–149 (IESM…ESDK) and 180–209 (KKKS…EENL). A compositionally biased stretch (basic residues) spans 210-233 (KKRRESKKSKKGKAPKKKKPSKKK).

The protein belongs to the SURF6 family. As to quaternary structure, component of the 90S and 60S pre-ribosomal particles.

It is found in the nucleus. It localises to the nucleolus. Its function is as follows. Involved in ribosome biogenesis and cell polarity. Required for the synthesis of both 40S and 60S ribosomal subunits and may also play some direct role in correct positioning of the mitotic spindle during mitosis. The polypeptide is Ribosomal RNA-processing protein 14-C (rrp14c) (Schizosaccharomyces pombe (strain 972 / ATCC 24843) (Fission yeast)).